A 95-amino-acid chain; its full sequence is Large ribosomal subunit protein eL37z (95 aa).

Zn(2+) contacts are provided by Cys-19, Cys-22, Cys-34, and Cys-37. Residues 19–37 form a C4-type zinc finger; sequence CVRCGRRSFHIQKSRCSAC.

This sequence belongs to the eukaryotic ribosomal protein eL37 family. It depends on Zn(2+) as a cofactor.

Functionally, binds to the 23S rRNA. In Arabidopsis thaliana (Mouse-ear cress), this protein is Large ribosomal subunit protein eL37z (RPL37A).